Consider the following 114-residue polypeptide: Pole-localizer protein TmaR (114 aa).

The stretch at 70–111 (RDDYESRVDDYTIRNAELSKQRREASTKMKEQKKAHAELLKN) forms a coiled coil. The disordered stretch occupies residues 89-114 (KQRREASTKMKEQKKAHAELLKNAEK).

This sequence belongs to the pole-localizer TmaR family.

It localises to the cytoplasm. In terms of biological role, pole-localizer protein involved in the regulation of several cellular processes. This Haemophilus influenzae (strain PittEE) protein is Pole-localizer protein TmaR.